We begin with the raw amino-acid sequence, 162 residues long: MQLQGPVFVGVPLLGPILICMLIHQPSSRCEDERKLPWCPPHKVILLVWVTIYSVMGYASYLVWKELGGGFRWPLALPLGLYSFQLALSWTFLVLFLAADSPGLALLDLLLLYGLVASLVFIWQPINKLAALLLLPYLAWLTVTTAITYRLWRDSLCPTYQP.

The next 5 helical transmembrane spans lie at 3-23, 44-64, 79-99, 103-123, and 129-149; these read LQGP…CMLI, VILL…YLVW, LGLY…FLAA, GLAL…VFIW, and LAAL…AITY.

The protein belongs to the TspO/BZRP family. In terms of assembly, homotetramer. May also form homodimer. As to expression, expressed in liver, bone marrow and spleen. In spleen, detected in red pulp but not in white pulp.

Its subcellular location is the endoplasmic reticulum membrane. It is found in the cell membrane. Its function is as follows. Cholesterol-binding protein involved in the redistribution of cholesterol from lipid droplets to the endoplasmic reticulum. Required to meet cholesterol demands during erythropoietic differentiation. May play a role in transport processes at the plasma membrane of erythrocytes, including regulating VDAC-mediated ATP export, and import of the heme precursors protoporphyrin IX and 5-aminolevulinic acid. The protein is Translocator protein 2 (Tspo2) of Mus musculus (Mouse).